A 488-amino-acid polypeptide reads, in one-letter code: Nitrogen metabolite repression protein nmr (488 aa).

The tract at residues 1–45 (MPAEILSELPLRPAPRDIKIPNAMHNEERRHKHSRSSYSEMSPLM) is disordered. The span at 14–29 (APRDIKIPNAMHNEER) shows a compositional bias: basic and acidic residues. A compositionally biased stretch (polar residues) spans 36 to 45 (SSYSEMSPLM). NADP(+) is bound by residues 71 to 76 (NAAGRQ), N165, K215, and 237 to 240 (YNNN). Residues 75–76 (RQ), 165–167 (NTT), K215, and 237–240 (YNNN) each bind NAD(+). Residues 412–488 (EEYDGGGGNN…NKRADEEWLA (77 aa)) form a dispensable for NMR function region. Residues 422–488 (IGNNHNNHHQ…NKRADEEWLA (67 aa)) are disordered. A compositionally biased stretch (low complexity) spans 438–459 (HQNGHQNGHNGINGHIVNGGVD). Residues 460–473 (SESEEEDSDSDDEG) are compositionally biased toward acidic residues.

This sequence belongs to the NmrA-type oxidoreductase family. As to quaternary structure, interacts with nit-2.

The protein localises to the nucleus. Functionally, may be a redox sensor protein. Negative transcriptional regulator involved in the post-transcriptional modulation of the GATA-type transcription factor nit-2, forming part of a system controlling nitrogen metabolite repression. This chain is Nitrogen metabolite repression protein nmr (nmr), found in Neurospora crassa (strain ATCC 24698 / 74-OR23-1A / CBS 708.71 / DSM 1257 / FGSC 987).